The chain runs to 238 residues: NAD(P)H-hydrate epimerase (238 aa).

Positions 10–225 constitute a YjeF N-terminal domain; that stretch reads AIKVDQILFN…ALQRQYELNL (216 aa). Residue 68 to 72 participates in (6S)-NADPHX binding; that stretch reads NNGGD. The K(+) site is built by asparagine 69 and aspartate 133. Residues 137–143 and aspartate 166 each bind (6S)-NADPHX; that span reads GFSFKPP. Serine 169 serves as a coordination point for K(+).

This sequence belongs to the NnrE/AIBP family. The cofactor is K(+).

The catalysed reaction is (6R)-NADHX = (6S)-NADHX. It catalyses the reaction (6R)-NADPHX = (6S)-NADPHX. In terms of biological role, catalyzes the epimerization of the S- and R-forms of NAD(P)HX, a damaged form of NAD(P)H that is a result of enzymatic or heat-dependent hydration. This is a prerequisite for the S-specific NAD(P)H-hydrate dehydratase to allow the repair of both epimers of NAD(P)HX. The sequence is that of NAD(P)H-hydrate epimerase from Drosophila willistoni (Fruit fly).